Reading from the N-terminus, the 585-residue chain is Zinc finger protein Eos (585 aa).

Disordered regions lie at residues 1 to 43 (MHTP…PDFL) and 68 to 98 (EKEF…SANS). Over residues 25 to 34 (QGKDNLERDP) the composition is skewed to basic and acidic residues. Residues 79–98 (SVSTPNSQHSSPSRSLSANS) are compositionally biased toward polar residues. A Glycyl lysine isopeptide (Lys-Gly) (interchain with G-Cter in SUMO2) cross-link involves residue lysine 100. Serine 105 is subject to Phosphoserine. 4 consecutive C2H2-type zinc fingers follow at residues 159–181 (LKCD…KRSH), 187–209 (FHCN…IKLH), 215–237 (FKCP…LRTH), and 248–271 (YKCN…ERCH). The tract at residues 281-585 (AQALAGQPGD…HIVRGEHKVG (305 aa)) is interaction with FOXP3. N6-acetyllysine is present on lysine 335. The segment at 410-489 (PGRLELPGSR…QPPPTIVVGR (80 aa)) is disordered. Positions 425 to 429 (PEDLA) match the CTBP-binding motif PEDLA motif. The segment covering 475-484 (QGPPPQPPPT) has biased composition (pro residues). Lysine 500 is covalently cross-linked (Glycyl lysine isopeptide (Lys-Gly) (interchain with G-Cter in SUMO2)). C2H2-type zinc fingers lie at residues 530–552 (FKCE…MGCH) and 558–582 (FECN…RGEH).

Belongs to the Ikaros C2H2-type zinc-finger protein family. Self-associates. Interacts with other family members; IKZF1, IKZF2, IKZF3 and IKZF5. Interacts with CTBP2. Interacts with SPI1, MITF, FOXP3 and CTBP1. In terms of tissue distribution, highly expressed in skeletal muscle, low levels of expression in heart, thymus, kidney, liver, and spleen. Expressed in the hematopoietic cell lines MOLT-4, NALM-6 and K-562. Highly expressed in THP-1 and M-07e cell lines, which have characteristics of myeloid and early megakaryocytic cells respectively.

The protein resides in the nucleus. Its function is as follows. DNA-binding protein that binds to the 5'GGGAATRCC-3' Ikaros-binding sequence. Transcriptional repressor. Interacts with SPI1 and MITF to repress transcription of the CTSK and ACP5 promoters via recruitment of corepressors SIN3A and CTBP2. May be involved in the development of central and peripheral nervous systems. Essential for the inhibitory function of regulatory T-cells (Treg). Mediates FOXP3-mediated gene silencing in regulatory T-cells (Treg) via recruitment of corepressor CTBP1. The polypeptide is Zinc finger protein Eos (IKZF4) (Homo sapiens (Human)).